A 313-amino-acid polypeptide reads, in one-letter code: Porphobilinogen deaminase (313 aa).

The residue at position 242 (C242) is an S-(dipyrrolylmethanemethyl)cysteine.

The protein belongs to the HMBS family. In terms of assembly, monomer. Dipyrromethane serves as cofactor.

It carries out the reaction 4 porphobilinogen + H2O = hydroxymethylbilane + 4 NH4(+). It participates in porphyrin-containing compound metabolism; protoporphyrin-IX biosynthesis; coproporphyrinogen-III from 5-aminolevulinate: step 2/4. Its function is as follows. Tetrapolymerization of the monopyrrole PBG into the hydroxymethylbilane pre-uroporphyrinogen in several discrete steps. This Escherichia coli (strain SE11) protein is Porphobilinogen deaminase.